A 202-amino-acid polypeptide reads, in one-letter code: Large ribosomal subunit protein uL4 (202 aa).

The tract at residues His45–Val71 is disordered.

The protein belongs to the universal ribosomal protein uL4 family. In terms of assembly, part of the 50S ribosomal subunit.

Its function is as follows. One of the primary rRNA binding proteins, this protein initially binds near the 5'-end of the 23S rRNA. It is important during the early stages of 50S assembly. It makes multiple contacts with different domains of the 23S rRNA in the assembled 50S subunit and ribosome. In terms of biological role, forms part of the polypeptide exit tunnel. The protein is Large ribosomal subunit protein uL4 of Buchnera aphidicola subsp. Baizongia pistaciae (strain Bp).